The primary structure comprises 381 residues: Probable tRNA sulfurtransferase (381 aa).

The THUMP domain occupies 52–155 (LTNLDALKYV…DASTYIFIDY (104 aa)). ATP is bound by residues 173–174 (LM), 198–199 (NF), Arg255, Gly277, and Gln286.

The protein belongs to the ThiI family.

The protein localises to the cytoplasm. It carries out the reaction [ThiI sulfur-carrier protein]-S-sulfanyl-L-cysteine + a uridine in tRNA + 2 reduced [2Fe-2S]-[ferredoxin] + ATP + H(+) = [ThiI sulfur-carrier protein]-L-cysteine + a 4-thiouridine in tRNA + 2 oxidized [2Fe-2S]-[ferredoxin] + AMP + diphosphate. The enzyme catalyses [ThiS sulfur-carrier protein]-C-terminal Gly-Gly-AMP + S-sulfanyl-L-cysteinyl-[cysteine desulfurase] + AH2 = [ThiS sulfur-carrier protein]-C-terminal-Gly-aminoethanethioate + L-cysteinyl-[cysteine desulfurase] + A + AMP + 2 H(+). The protein operates within cofactor biosynthesis; thiamine diphosphate biosynthesis. Its function is as follows. Catalyzes the ATP-dependent transfer of a sulfur to tRNA to produce 4-thiouridine in position 8 of tRNAs, which functions as a near-UV photosensor. Also catalyzes the transfer of sulfur to the sulfur carrier protein ThiS, forming ThiS-thiocarboxylate. This is a step in the synthesis of thiazole, in the thiamine biosynthesis pathway. The sulfur is donated as persulfide by IscS. The polypeptide is Probable tRNA sulfurtransferase (Metamycoplasma arthritidis (strain 158L3-1) (Mycoplasma arthritidis)).